The following is a 550-amino-acid chain: Spermatogenesis-associated protein 2 (550 aa).

The PUB domain maps to 83–156 (TVGTAFATLE…YNVRDHPGGA (74 aa)). Positions 320–337 (YHLSSLDEVDLYTERGLG) match the PIM motif motif. Positions 457 to 480 (SKPVGSGPSPVGSLVSSGSSSSGG) are disordered.

It belongs to the SPATA2 family.

The protein resides in the cytoplasm. The protein localises to the nucleus. Functionally, bridging factor that mediates the recruitment of cyld to the LUBAC complex, thereby regulating TNF-alpha-induced necroptosis. Required to activate the 'Met-1'- (linear) and 'Lys-63'-linked deubiquitinase activities of cyld. This is Spermatogenesis-associated protein 2 from Danio rerio (Zebrafish).